Consider the following 541-residue polypeptide: Putative ammonium transporter sll0537 (541 aa).

11 helical membrane-spanning segments follow: residues 6-26, 44-64, 86-106, 117-137, 161-181, 203-223, 235-255, 260-280, 283-303, 316-336, and 356-376; these read TLWL…FMCL, FADF…IMFG, LAVF…IISG, YLLV…DWAW, FAGS…TILV, MPFS…FNGG, IMVN…LISL, MIQV…ITAS, VVMT…AYLV, VDAV…VGLF, and LLGI…FLTL.

The protein belongs to the ammonia transporter channel (TC 1.A.11.2) family.

Its subcellular location is the cell membrane. The polypeptide is Putative ammonium transporter sll0537 (Synechocystis sp. (strain ATCC 27184 / PCC 6803 / Kazusa)).